Here is a 458-residue protein sequence, read N- to C-terminus: Serine--tRNA ligase (458 aa).

255–257 provides a ligand contact to L-serine; it reads TSE. Residues 286-288 and valine 302 contribute to the ATP site; that span reads RKE. Glutamate 309 serves as a coordination point for L-serine. ATP is bound at residue 373 to 376; that stretch reads ELVS. Threonine 409 is a binding site for L-serine.

It belongs to the class-II aminoacyl-tRNA synthetase family. Type-1 seryl-tRNA synthetase subfamily. As to quaternary structure, homodimer. The tRNA molecule binds across the dimer.

It is found in the cytoplasm. It carries out the reaction tRNA(Ser) + L-serine + ATP = L-seryl-tRNA(Ser) + AMP + diphosphate + H(+). The enzyme catalyses tRNA(Sec) + L-serine + ATP = L-seryl-tRNA(Sec) + AMP + diphosphate + H(+). It functions in the pathway aminoacyl-tRNA biosynthesis; selenocysteinyl-tRNA(Sec) biosynthesis; L-seryl-tRNA(Sec) from L-serine and tRNA(Sec): step 1/1. In terms of biological role, catalyzes the attachment of serine to tRNA(Ser). Is also able to aminoacylate tRNA(Sec) with serine, to form the misacylated tRNA L-seryl-tRNA(Sec), which will be further converted into selenocysteinyl-tRNA(Sec). In Ignicoccus hospitalis (strain KIN4/I / DSM 18386 / JCM 14125), this protein is Serine--tRNA ligase.